The following is a 195-amino-acid chain: Probable DNA-directed RNA polymerase subunit delta (195 aa).

Residues 14-81 (LSMIEVAHAI…GDNTWGLRAW (68 aa)) enclose the HTH HARE-type domain. The disordered stretch occupies residues 91 to 195 (TVGETEDEED…DEEDKEDDEE (105 aa)). Acidic residues-rich tracts occupy residues 116–171 (TDDD…EDQL) and 179–195 (FGDDEEEDEEDKEDDEE).

It belongs to the RpoE family. RNAP is composed of a core of 2 alpha, a beta and a beta' subunits. The core is associated with a delta subunit and one of several sigma factors.

Participates in both the initiation and recycling phases of transcription. In the presence of the delta subunit, RNAP displays an increased specificity of transcription, a decreased affinity for nucleic acids, and an increased efficiency of RNA synthesis because of enhanced recycling. In Limosilactobacillus fermentum (strain NBRC 3956 / LMG 18251) (Lactobacillus fermentum), this protein is Probable DNA-directed RNA polymerase subunit delta.